The chain runs to 121 residues: Small ribosomal subunit protein uS13 (121 aa).

Positions 91-121 (HRRGLPTRGQNTKNNARTRKGPVKTVANKKK) are disordered. Residues 106 to 121 (ARTRKGPVKTVANKKK) show a composition bias toward basic residues.

This sequence belongs to the universal ribosomal protein uS13 family. Part of the 30S ribosomal subunit. Forms a loose heterodimer with protein S19. Forms two bridges to the 50S subunit in the 70S ribosome.

Functionally, located at the top of the head of the 30S subunit, it contacts several helices of the 16S rRNA. In the 70S ribosome it contacts the 23S rRNA (bridge B1a) and protein L5 of the 50S subunit (bridge B1b), connecting the 2 subunits; these bridges are implicated in subunit movement. Contacts the tRNAs in the A and P-sites. The chain is Small ribosomal subunit protein uS13 from Macrococcus caseolyticus (strain JCSC5402) (Macrococcoides caseolyticum).